The primary structure comprises 175 residues: Translation initiation factor IF-3 (175 aa).

It belongs to the IF-3 family. As to quaternary structure, monomer.

It localises to the cytoplasm. IF-3 binds to the 30S ribosomal subunit and shifts the equilibrium between 70S ribosomes and their 50S and 30S subunits in favor of the free subunits, thus enhancing the availability of 30S subunits on which protein synthesis initiation begins. This is Translation initiation factor IF-3 from Staphylococcus carnosus (strain TM300).